Consider the following 231-residue polypeptide: Ribonuclease P protein component 3 (231 aa).

The protein belongs to the eukaryotic/archaeal RNase P protein component 3 family. In terms of assembly, consists of a catalytic RNA component and at least 4-5 protein subunits.

Its subcellular location is the cytoplasm. It catalyses the reaction Endonucleolytic cleavage of RNA, removing 5'-extranucleotides from tRNA precursor.. In terms of biological role, part of ribonuclease P, a protein complex that generates mature tRNA molecules by cleaving their 5'-ends. This is Ribonuclease P protein component 3 from Methanococcus maripaludis (strain C5 / ATCC BAA-1333).